The following is a 362-amino-acid chain: UDP-3-O-acylglucosamine N-acyltransferase 1 (362 aa).

Histidine 258 (proton acceptor) is an active-site residue.

Belongs to the transferase hexapeptide repeat family. LpxD subfamily. In terms of assembly, homotrimer.

It carries out the reaction a UDP-3-O-[(3R)-3-hydroxyacyl]-alpha-D-glucosamine + a (3R)-hydroxyacyl-[ACP] = a UDP-2-N,3-O-bis[(3R)-3-hydroxyacyl]-alpha-D-glucosamine + holo-[ACP] + H(+). Its pathway is bacterial outer membrane biogenesis; LPS lipid A biosynthesis. Catalyzes the N-acylation of UDP-3-O-acylglucosamine using 3-hydroxyacyl-ACP as the acyl donor. Is involved in the biosynthesis of lipid A, a phosphorylated glycolipid that anchors the lipopolysaccharide to the outer membrane of the cell. The sequence is that of UDP-3-O-acylglucosamine N-acyltransferase 1 from Nitrobacter winogradskyi (strain ATCC 25391 / DSM 10237 / CIP 104748 / NCIMB 11846 / Nb-255).